Here is a 277-residue protein sequence, read N- to C-terminus: Secoisolariciresinol dehydrogenase (277 aa).

NAD(+) is bound by residues 24–29 (GGASGI), Asp48, Val73, and Asn99. Ser163 is a binding site for substrate. Tyr166 (proton donor/acceptor) is an active-site residue. Lys170 is an NAD(+) binding site.

The protein belongs to the short-chain dehydrogenases/reductases (SDR) family. In terms of assembly, homotetramer.

It carries out the reaction (-)-secoisolariciresinol + 2 NAD(+) = (-)-matairesinol + 2 NADH + 2 H(+). Its function is as follows. Oxidoreductase involved in lignan biosynthesis. Catalyzes the stereospecific conversion of (-)-secoisolariciresinol to (-)-matairesinol via a lactol intermediate. The chain is Secoisolariciresinol dehydrogenase from Forsythia intermedia (Border forsythia).